A 197-amino-acid polypeptide reads, in one-letter code: Imidazoleglycerol-phosphate dehydratase (197 aa).

It belongs to the imidazoleglycerol-phosphate dehydratase family.

The protein localises to the cytoplasm. The enzyme catalyses D-erythro-1-(imidazol-4-yl)glycerol 3-phosphate = 3-(imidazol-4-yl)-2-oxopropyl phosphate + H2O. It participates in amino-acid biosynthesis; L-histidine biosynthesis; L-histidine from 5-phospho-alpha-D-ribose 1-diphosphate: step 6/9. This Bradyrhizobium diazoefficiens (strain JCM 10833 / BCRC 13528 / IAM 13628 / NBRC 14792 / USDA 110) protein is Imidazoleglycerol-phosphate dehydratase.